Here is a 732-residue protein sequence, read N- to C-terminus: Phosphoribosylformylglycinamidine synthase subunit PurL (732 aa).

Residue histidine 32 is part of the active site. Residue tyrosine 35 participates in ATP binding. Glutamate 81 contributes to the Mg(2+) binding site. Residues 82–85 (SHNH) and arginine 104 contribute to the substrate site. Histidine 83 serves as the catalytic Proton acceptor. Mg(2+) is bound at residue aspartate 105. A substrate-binding site is contributed by glutamine 230. Residue aspartate 258 participates in Mg(2+) binding. 302–304 (ESQ) is a binding site for substrate. Residues aspartate 485 and glycine 522 each coordinate ATP. Asparagine 523 provides a ligand contact to Mg(2+). Position 525 (serine 525) interacts with substrate.

This sequence belongs to the FGAMS family. As to quaternary structure, monomer. Part of the FGAM synthase complex composed of 1 PurL, 1 PurQ and 2 PurS subunits.

Its subcellular location is the cytoplasm. It carries out the reaction N(2)-formyl-N(1)-(5-phospho-beta-D-ribosyl)glycinamide + L-glutamine + ATP + H2O = 2-formamido-N(1)-(5-O-phospho-beta-D-ribosyl)acetamidine + L-glutamate + ADP + phosphate + H(+). The protein operates within purine metabolism; IMP biosynthesis via de novo pathway; 5-amino-1-(5-phospho-D-ribosyl)imidazole from N(2)-formyl-N(1)-(5-phospho-D-ribosyl)glycinamide: step 1/2. Part of the phosphoribosylformylglycinamidine synthase complex involved in the purines biosynthetic pathway. Catalyzes the ATP-dependent conversion of formylglycinamide ribonucleotide (FGAR) and glutamine to yield formylglycinamidine ribonucleotide (FGAM) and glutamate. The FGAM synthase complex is composed of three subunits. PurQ produces an ammonia molecule by converting glutamine to glutamate. PurL transfers the ammonia molecule to FGAR to form FGAM in an ATP-dependent manner. PurS interacts with PurQ and PurL and is thought to assist in the transfer of the ammonia molecule from PurQ to PurL. The sequence is that of Phosphoribosylformylglycinamidine synthase subunit PurL from Methanococcus aeolicus (strain ATCC BAA-1280 / DSM 17508 / OCM 812 / Nankai-3).